Reading from the N-terminus, the 668-residue chain is SHC SH2 domain-binding protein 1 (668 aa).

Ala-2 is subject to N-acetylalanine. Phosphoserine occurs at positions 31, 44, and 273. 5 PbH1 repeats span residues 428-451 (GMDV…LIIH), 452-473 (HGKT…TVRT), 474-496 (SAEL…EIYP), 497-518 (GSKC…LIKD), and 526-548 (IPKI…VLVK). At Ser-630 the chain carries Phosphoserine.

In terms of assembly, interacts directly with isoform p52shc of SHC1 via its SH2 domain. Interacts with TRIM71; leading to enhanced SHCBP1 protein stability. Interacts with both members of the centralspindlin complex, KIF23 and RACGAP1. Expressed in spleen, lung and heart with higher expression in testis. No expression in brain, liver and skeletal muscle. Elevated expression in actively cycling cells.

The protein resides in the midbody. It is found in the cytoplasm. The protein localises to the cytoskeleton. Its subcellular location is the spindle. Its function is as follows. May play a role in signaling pathways governing cellular proliferation, cell growth and differentiation. May be a component of a novel signaling pathway downstream of Shc. Acts as a positive regulator of FGF signaling in neural progenitor cells. In Mus musculus (Mouse), this protein is SHC SH2 domain-binding protein 1 (Shcbp1).